Here is a 358-residue protein sequence, read N- to C-terminus: UDP-N-acetylglucosamine--N-acetylmuramyl-(pentapeptide) pyrophosphoryl-undecaprenol N-acetylglucosamine transferase (358 aa).

UDP-N-acetyl-alpha-D-glucosamine-binding positions include 11 to 13 (TGG), Asn124, Arg164, Ser195, and Gln291.

This sequence belongs to the glycosyltransferase 28 family. MurG subfamily.

Its subcellular location is the cell inner membrane. The catalysed reaction is di-trans,octa-cis-undecaprenyl diphospho-N-acetyl-alpha-D-muramoyl-L-alanyl-D-glutamyl-meso-2,6-diaminopimeloyl-D-alanyl-D-alanine + UDP-N-acetyl-alpha-D-glucosamine = di-trans,octa-cis-undecaprenyl diphospho-[N-acetyl-alpha-D-glucosaminyl-(1-&gt;4)]-N-acetyl-alpha-D-muramoyl-L-alanyl-D-glutamyl-meso-2,6-diaminopimeloyl-D-alanyl-D-alanine + UDP + H(+). The protein operates within cell wall biogenesis; peptidoglycan biosynthesis. In terms of biological role, cell wall formation. Catalyzes the transfer of a GlcNAc subunit on undecaprenyl-pyrophosphoryl-MurNAc-pentapeptide (lipid intermediate I) to form undecaprenyl-pyrophosphoryl-MurNAc-(pentapeptide)GlcNAc (lipid intermediate II). This is UDP-N-acetylglucosamine--N-acetylmuramyl-(pentapeptide) pyrophosphoryl-undecaprenol N-acetylglucosamine transferase from Leptospira borgpetersenii serovar Hardjo-bovis (strain JB197).